The sequence spans 249 residues: 5'-nucleotidase SurE (249 aa).

A divalent metal cation is bound by residues D9, D10, S40, and N92.

It belongs to the SurE nucleotidase family. It depends on a divalent metal cation as a cofactor.

It is found in the cytoplasm. It catalyses the reaction a ribonucleoside 5'-phosphate + H2O = a ribonucleoside + phosphate. Nucleotidase that shows phosphatase activity on nucleoside 5'-monophosphates. The protein is 5'-nucleotidase SurE of Shewanella sp. (strain ANA-3).